Consider the following 608-residue polypeptide: Chaperone protein DnaK (608 aa).

Residue T175 is modified to Phosphothreonine; by autocatalysis.

Belongs to the heat shock protein 70 family.

In terms of biological role, acts as a chaperone. The sequence is that of Chaperone protein DnaK from Finegoldia magna (strain ATCC 29328 / DSM 20472 / WAL 2508) (Peptostreptococcus magnus).